We begin with the raw amino-acid sequence, 174 residues long: Chorion class CB protein M5H4 (174 aa).

A signal peptide spans 1 to 20 (MTTIVVLICASALFVQLAFS). Residues 21-71 (QCLGRDPVIGFGGAYGSGWGGYDAISPYDGLGYGVPYSAGFIGLSPSNLAA) are left arm. The segment at 72–142 (SCGGALAVNS…GDGAIGIVSE (71 aa)) is central domain. The interval 143–174 (APIVAPASIGYGQWPVNAGYKGIGPCGCGGLY) is right arm.

This sequence belongs to the chorion protein family.

This protein is one of many from the eggshell of the silk moth. The sequence is that of Chorion class CB protein M5H4 from Bombyx mori (Silk moth).